Reading from the N-terminus, the 248-residue chain is Pulmonary surfactant-associated protein A (248 aa).

The N-terminal stretch at 1–20 (MLLCSLTLTLILLAVSGTKC) is a signal peptide. The Collagen-like domain occupies 31–100 (GVPGIPGSPG…PGERGPPGPP (70 aa)). Positions 34–105 (GIPGSPGLPG…PPGPPAYPDE (72 aa)) are disordered. A compositionally biased stretch (pro residues) spans 54 to 65 (PGPPGPIGPPGG). Residues 84 to 93 (ERGDKGEPGE) show a composition bias toward basic and acidic residues. The C-type lectin domain maps to 134 to 247 (VGEKVFSTNG…CLQYRLAICE (114 aa)). Intrachain disulfides connect C155–C246 and C224–C238. N207 carries an N-linked (GlcNAc...) asparagine glycan. Residues E215, R217, N234, and D235 each contribute to the Ca(2+) site.

This sequence belongs to the SFTPA family. As to quaternary structure, oligomeric complex of 6 set of homotrimers.

It localises to the secreted. The protein localises to the extracellular space. It is found in the extracellular matrix. The protein resides in the surface film. In terms of biological role, in presence of calcium ions, it binds to surfactant phospholipids and contributes to lower the surface tension at the air-liquid interface in the alveoli of the mammalian lung and is essential for normal respiration. Enhances the expression of MYO18A/SP-R210 on alveolar macrophages. The polypeptide is Pulmonary surfactant-associated protein A (SFTPA1) (Equus caballus (Horse)).